A 152-amino-acid polypeptide reads, in one-letter code: ESAT-6 secretion machinery protein EssA (152 aa).

Over 1 to 114 (MLMNSVIALT…PYIQNKQEKK (114 aa)) the chain is Cytoplasmic. The interval 62-83 (ERQQQIKNDMFQNQASHSTRLN) is disordered. Residues 66 to 80 (QIKNDMFQNQASHST) are compositionally biased toward polar residues. Residues 115-135 (IFPYILMSVGAFLTLGFVIFS) form a helical membrane-spanning segment. The Extracellular segment spans residues 136-152 (IHKGRRTKNESARKSNI).

It belongs to the EssA family.

The protein resides in the cell membrane. Component of the ESAT-6 secretion system (Ess). Required for the secretion of EsxA and EsxB. The polypeptide is ESAT-6 secretion machinery protein EssA (Staphylococcus aureus (strain COL)).